The primary structure comprises 99 residues: Small ribosomal subunit protein bS20 (99 aa).

This sequence belongs to the bacterial ribosomal protein bS20 family.

Binds directly to 16S ribosomal RNA. This chain is Small ribosomal subunit protein bS20, found in Cyanothece sp. (strain PCC 7425 / ATCC 29141).